Reading from the N-terminus, the 121-residue chain is Ribosome-binding factor A (121 aa).

It belongs to the RbfA family. As to quaternary structure, monomer. Binds 30S ribosomal subunits, but not 50S ribosomal subunits or 70S ribosomes.

The protein localises to the cytoplasm. Functionally, one of several proteins that assist in the late maturation steps of the functional core of the 30S ribosomal subunit. Associates with free 30S ribosomal subunits (but not with 30S subunits that are part of 70S ribosomes or polysomes). Required for efficient processing of 16S rRNA. May interact with the 5'-terminal helix region of 16S rRNA. The sequence is that of Ribosome-binding factor A from Brevibacillus brevis (strain 47 / JCM 6285 / NBRC 100599).